Reading from the N-terminus, the 86-residue chain is Exodeoxyribonuclease 7 small subunit (86 aa).

Positions 67–86 are disordered; sequence LSDPAQPEASEPFDPPSHDG.

The protein belongs to the XseB family. As to quaternary structure, heterooligomer composed of large and small subunits.

It is found in the cytoplasm. The catalysed reaction is Exonucleolytic cleavage in either 5'- to 3'- or 3'- to 5'-direction to yield nucleoside 5'-phosphates.. Functionally, bidirectionally degrades single-stranded DNA into large acid-insoluble oligonucleotides, which are then degraded further into small acid-soluble oligonucleotides. This Stenotrophomonas maltophilia (strain K279a) protein is Exodeoxyribonuclease 7 small subunit.